Here is a 203-residue protein sequence, read N- to C-terminus: Protein GrpE (203 aa).

It belongs to the GrpE family. As to quaternary structure, homodimer.

The protein localises to the cytoplasm. In terms of biological role, participates actively in the response to hyperosmotic and heat shock by preventing the aggregation of stress-denatured proteins, in association with DnaK and GrpE. It is the nucleotide exchange factor for DnaK and may function as a thermosensor. Unfolded proteins bind initially to DnaJ; upon interaction with the DnaJ-bound protein, DnaK hydrolyzes its bound ATP, resulting in the formation of a stable complex. GrpE releases ADP from DnaK; ATP binding to DnaK triggers the release of the substrate protein, thus completing the reaction cycle. Several rounds of ATP-dependent interactions between DnaJ, DnaK and GrpE are required for fully efficient folding. This Pseudoalteromonas translucida (strain TAC 125) protein is Protein GrpE.